Reading from the N-terminus, the 351-residue chain is Phosphoribosylformylglycinamidine cyclo-ligase (351 aa).

The protein belongs to the AIR synthase family.

It localises to the cytoplasm. It catalyses the reaction 2-formamido-N(1)-(5-O-phospho-beta-D-ribosyl)acetamidine + ATP = 5-amino-1-(5-phospho-beta-D-ribosyl)imidazole + ADP + phosphate + H(+). The protein operates within purine metabolism; IMP biosynthesis via de novo pathway; 5-amino-1-(5-phospho-D-ribosyl)imidazole from N(2)-formyl-N(1)-(5-phospho-D-ribosyl)glycinamide: step 2/2. This is Phosphoribosylformylglycinamidine cyclo-ligase from Oleidesulfovibrio alaskensis (strain ATCC BAA-1058 / DSM 17464 / G20) (Desulfovibrio alaskensis).